A 932-amino-acid polypeptide reads, in one-letter code: Lon protease homolog 2, peroxisomal (932 aa).

The Lon N-terminal domain occupies 11–259; the sequence is LALVPLPKGS…RVVELLARQV (249 aa). Residues 304–340 are disordered; sequence TGLTPPGAAGGRNNEDEKETNEVDELQKRLQEAELSP. The segment covering 328 to 340 has biased composition (basic and acidic residues); it reads ELQKRLQEAELSP. 486 to 493 serves as a coordination point for ATP; it reads GPPGTGKT. Residues 729-916 form the Lon proteolytic domain; sequence HGRPGVVTGL…WEAIRQVWPG (188 aa). Residues Ser-822 and Lys-865 contribute to the active site. A Microbody targeting signal motif is present at residues 930–932; that stretch reads SRL.

This sequence belongs to the peptidase S16 family.

The protein resides in the peroxisome matrix. It carries out the reaction Hydrolysis of proteins in presence of ATP.. In terms of biological role, ATP-dependent serine protease that mediates the selective degradation of misfolded and unassembled polypeptides in the peroxisomal matrix. Necessary for type 2 peroxisome targeting signal (PTS2)-containing protein processing and facilitates peroxisome matrix protein import. The chain is Lon protease homolog 2, peroxisomal from Aspergillus fumigatus (strain ATCC MYA-4609 / CBS 101355 / FGSC A1100 / Af293) (Neosartorya fumigata).